The chain runs to 326 residues: N-acetyl-gamma-glutamyl-phosphate reductase (326 aa).

Residue Cys155 is part of the active site.

This sequence belongs to the NAGSA dehydrogenase family. Type 1 subfamily.

The protein localises to the cytoplasm. The catalysed reaction is N-acetyl-L-glutamate 5-semialdehyde + phosphate + NADP(+) = N-acetyl-L-glutamyl 5-phosphate + NADPH + H(+). The protein operates within amino-acid biosynthesis; L-arginine biosynthesis; N(2)-acetyl-L-ornithine from L-glutamate: step 3/4. Catalyzes the NADPH-dependent reduction of N-acetyl-5-glutamyl phosphate to yield N-acetyl-L-glutamate 5-semialdehyde. The chain is N-acetyl-gamma-glutamyl-phosphate reductase from Shewanella baltica (strain OS223).